Consider the following 191-residue polypeptide: Protein GrpE (191 aa).

The segment covering 1–10 (MNHEEQKVEA) has biased composition (basic and acidic residues). Residues 1 to 28 (MNHEEQKVEAMEQVEAQPVEPTDVDSEV) are disordered.

The protein belongs to the GrpE family. Homodimer.

The protein resides in the cytoplasm. Its function is as follows. Participates actively in the response to hyperosmotic and heat shock by preventing the aggregation of stress-denatured proteins, in association with DnaK and GrpE. It is the nucleotide exchange factor for DnaK and may function as a thermosensor. Unfolded proteins bind initially to DnaJ; upon interaction with the DnaJ-bound protein, DnaK hydrolyzes its bound ATP, resulting in the formation of a stable complex. GrpE releases ADP from DnaK; ATP binding to DnaK triggers the release of the substrate protein, thus completing the reaction cycle. Several rounds of ATP-dependent interactions between DnaJ, DnaK and GrpE are required for fully efficient folding. This Aeromonas hydrophila subsp. hydrophila (strain ATCC 7966 / DSM 30187 / BCRC 13018 / CCUG 14551 / JCM 1027 / KCTC 2358 / NCIMB 9240 / NCTC 8049) protein is Protein GrpE.